The sequence spans 782 residues: Phosphate transporter PHO1 (782 aa).

Residues 1 to 386 (MVKFSKELEA…HQTKDSHMVT (386 aa)) are Cytoplasmic-facing. One can recognise an SPX domain in the interval 2–334 (VKFSKELEAQ…GQNASSTYLK (333 aa)). The disordered stretch occupies residues 165-202 (KKRNLSGSNSHRSFSSSVRNSDFSAGSPGELSEIQSET). The segment covering 170-188 (SGSNSHRSFSSSVRNSDFS) has biased composition (low complexity). The interval 315–322 (KIMKKFDK) is important for inositol polyphosphate binding. The chain crosses the membrane as a helical span at residues 387-407 (FFVGLFTGCFISLFVIYIILA). Residues 408 to 423 (HLSGIFTSSDQVSYLE) are Lumenal-facing. The helical transmembrane segment at 424–444 (TVYPVFSVFALLSLHMFMYGC) threads the bilayer. The Cytoplasmic segment spans residues 445 to 473 (NLYMWKNTRINYTFIFEFAPNTALRYRDA). A helical membrane pass occupies residues 474-494 (FLMGTTFMTSVVAAMVIHLIL). The Lumenal portion of the chain corresponds to 495–506 (RASGFSASQVDT). The helical transmembrane segment at 507–527 (IPGILLLIFICVLICPFNTFY) threads the bilayer. At 528-593 (RPTRFCFIRI…THEYNTCKNG (66 aa)) the chain is on the cytoplasmic side. The EXS domain occupies 591 to 782 (KNGRYYREFA…LPFLDRDSDG (192 aa)). The chain crosses the membrane as a helical span at residues 594 to 614 (RYYREFAYLISFLPYFWRAMQ). Residues 615–619 (CVRRW) lie on the Lumenal side of the membrane. Residues 620–639 (WDESNPDHLINMGKYVSAMV) traverse the membrane as a helical segment. Residues 640–782 (AAGVRITYAR…LPFLDRDSDG (143 aa)) lie on the Cytoplasmic side of the membrane.

This sequence belongs to the SYG1 (TC 2.A.94) family. Interacts with PHO2. PHO1 degradation is PHO2 dependent and involves multivesicular body-mediated vacuolar proteolysis. In terms of tissue distribution, predominantly in roots, but also weak expression in the lower part of the hypocotyl. In the stellar cells, including the pericycle and xylem parenchyma cells, but not in the cortical or epidermal cells. Expressed in guard cells.

It localises to the golgi apparatus membrane. The protein resides in the golgi apparatus. It is found in the trans-Golgi network membrane. Its subcellular location is the endoplasmic reticulum membrane. Its function is as follows. Inositol polyphosphate sensor that associates with transcription factors to regulate inorganic phosphate (Pi) starvation responses. Probably acts by binding inositol polyphosphate via its SPX domain. Acts as a Pi exporter, mediating efflux of Pi out of cells. Transfers Pi from the epidermal and cortical cells to the root xylem vessels. Involved in the transfer of Pi from roots to shoots. Involved in abscisic acid (ABA) induction of stomatal closure and ABA repression of stomatal opening. The sequence is that of Phosphate transporter PHO1 from Arabidopsis thaliana (Mouse-ear cress).